Consider the following 180-residue polypeptide: Homeobox protein ceh-12 (180 aa).

Positions 15 to 37 (SSQNEDQKLESHPSPPSQIPNYS) are disordered. A DNA-binding region (homeobox) is located at residues 110-169 (MRRPRTAFSSEQLVQLEKQFSDNRYLSRPRRYQLAQQLSLSETQIKIWFQNRRMKNKRCP).

As to expression, expressed in VB motor neurons in the ventral nerve cord.

The protein localises to the nucleus. Transcription factor. Plays a role, downstream from homeobox protein unc-4 and Wnt signaling, in specifying synaptic inputs to A-class motor neurons. Involved in patterning of the synaptic outputs of the postmitotic DA class cholinergic motor neurons. This chain is Homeobox protein ceh-12 (ceh-12), found in Caenorhabditis elegans.